The primary structure comprises 230 residues: Large ribosomal subunit protein uL1 (230 aa).

This sequence belongs to the universal ribosomal protein uL1 family. Part of the 50S ribosomal subunit.

Functionally, binds directly to 23S rRNA. The L1 stalk is quite mobile in the ribosome, and is involved in E site tRNA release. Protein L1 is also a translational repressor protein, it controls the translation of the L11 operon by binding to its mRNA. The sequence is that of Large ribosomal subunit protein uL1 from Bradyrhizobium diazoefficiens (strain JCM 10833 / BCRC 13528 / IAM 13628 / NBRC 14792 / USDA 110).